The chain runs to 194 residues: FMN-dependent NADH:quinone oxidoreductase (194 aa).

Residues Ser-10, 16-18 (SQS), 91-94 (MYNF), and 135-138 (TRGG) each bind FMN.

It belongs to the azoreductase type 1 family. In terms of assembly, homodimer. The cofactor is FMN.

It carries out the reaction 2 a quinone + NADH + H(+) = 2 a 1,4-benzosemiquinone + NAD(+). It catalyses the reaction N,N-dimethyl-1,4-phenylenediamine + anthranilate + 2 NAD(+) = 2-(4-dimethylaminophenyl)diazenylbenzoate + 2 NADH + 2 H(+). Functionally, quinone reductase that provides resistance to thiol-specific stress caused by electrophilic quinones. Also exhibits azoreductase activity. Catalyzes the reductive cleavage of the azo bond in aromatic azo compounds to the corresponding amines. This is FMN-dependent NADH:quinone oxidoreductase from Vibrio parahaemolyticus serotype O3:K6 (strain RIMD 2210633).